A 111-amino-acid polypeptide reads, in one-letter code: Prophage-derived-like uncharacterized protein YozM (111 aa).

The first 24 residues, 1 to 24 (MKKRLIGFLVLVPALIMWGITLIE), serve as a signal peptide directing secretion.

This is Prophage-derived-like uncharacterized protein YozM (yozM) from Bacillus subtilis (strain 168).